Here is a 301-residue protein sequence, read N- to C-terminus: N-acetylmuramic acid 6-phosphate etherase (301 aa).

The region spanning 59 to 222 (TSEALMHGGR…STSVMVKLGK (164 aa)) is the SIS domain. Glu-87 acts as the Proton donor in catalysis. The active site involves Glu-118.

It belongs to the GCKR-like family. MurNAc-6-P etherase subfamily. As to quaternary structure, homodimer.

The enzyme catalyses N-acetyl-D-muramate 6-phosphate + H2O = N-acetyl-D-glucosamine 6-phosphate + (R)-lactate. Its pathway is amino-sugar metabolism; N-acetylmuramate degradation. Its function is as follows. Specifically catalyzes the cleavage of the D-lactyl ether substituent of MurNAc 6-phosphate, producing GlcNAc 6-phosphate and D-lactate. The chain is N-acetylmuramic acid 6-phosphate etherase from Picosynechococcus sp. (strain ATCC 27264 / PCC 7002 / PR-6) (Agmenellum quadruplicatum).